The chain runs to 199 residues: Peptidyl-tRNA hydrolase (199 aa).

Residue Tyr-15 participates in tRNA binding. The Proton acceptor role is filled by His-20. Positions 66, 68, and 114 each coordinate tRNA.

It belongs to the PTH family. Monomer.

The protein resides in the cytoplasm. It catalyses the reaction an N-acyl-L-alpha-aminoacyl-tRNA + H2O = an N-acyl-L-amino acid + a tRNA + H(+). Hydrolyzes ribosome-free peptidyl-tRNAs (with 1 or more amino acids incorporated), which drop off the ribosome during protein synthesis, or as a result of ribosome stalling. Functionally, catalyzes the release of premature peptidyl moieties from peptidyl-tRNA molecules trapped in stalled 50S ribosomal subunits, and thus maintains levels of free tRNAs and 50S ribosomes. This is Peptidyl-tRNA hydrolase from Burkholderia ambifaria (strain MC40-6).